Consider the following 156-residue polypeptide: Small ribosomal subunit protein uS7 (156 aa).

The protein belongs to the universal ribosomal protein uS7 family. As to quaternary structure, part of the 30S ribosomal subunit. Contacts proteins S9 and S11.

One of the primary rRNA binding proteins, it binds directly to 16S rRNA where it nucleates assembly of the head domain of the 30S subunit. Is located at the subunit interface close to the decoding center, probably blocks exit of the E-site tRNA. The chain is Small ribosomal subunit protein uS7 from Shewanella denitrificans (strain OS217 / ATCC BAA-1090 / DSM 15013).